A 364-amino-acid polypeptide reads, in one-letter code: Aminomethyltransferase (364 aa).

It belongs to the GcvT family. The glycine cleavage system is composed of four proteins: P, T, L and H.

The enzyme catalyses N(6)-[(R)-S(8)-aminomethyldihydrolipoyl]-L-lysyl-[protein] + (6S)-5,6,7,8-tetrahydrofolate = N(6)-[(R)-dihydrolipoyl]-L-lysyl-[protein] + (6R)-5,10-methylene-5,6,7,8-tetrahydrofolate + NH4(+). Its function is as follows. The glycine cleavage system catalyzes the degradation of glycine. The sequence is that of Aminomethyltransferase from Shewanella denitrificans (strain OS217 / ATCC BAA-1090 / DSM 15013).